The chain runs to 104 residues: Large ribosomal subunit protein uL24 (104 aa).

It belongs to the universal ribosomal protein uL24 family. Part of the 50S ribosomal subunit.

In terms of biological role, one of two assembly initiator proteins, it binds directly to the 5'-end of the 23S rRNA, where it nucleates assembly of the 50S subunit. Its function is as follows. One of the proteins that surrounds the polypeptide exit tunnel on the outside of the subunit. In Rhodopseudomonas palustris (strain BisB18), this protein is Large ribosomal subunit protein uL24.